The following is a 435-amino-acid chain: MSTGFFGDIQKVRYEGPESDNPLAFRHYNADEIVLGKRMEDHLRFAVAYWHSFAWEGGDPFGGRTFDRPWFSNEIDAAKLKADVAFEFFSLLGAPYYCFHDADVRPEGRNFAENTRYLNEIVDIFEKKQAETGMKLLWGTANLFSNRRYMAGAATNPDPDVFAFAAATVKTCIDATKRLGGENYVLWGGREGYETLLNTDLSRELDHMGRFLSLVVEYKHKIGFKGTILIEPKPQAPTKHQYDYDVATVYGFLKRYGLENEVKVNIEQGHAILAGHSFEHELALARTLGIFGSIDMNRNDYQSGWDTDQFPNNVPEMALAYYQVLLAGGFTTGGTNFDAKLRRQSLDPQDLLIGHIGGMDCCARGLKASARMLEDGALSKPLDERYAGWNGEFGKRLLSGLSLDQIAGEVEAKDINPQPKSGRQEYLENIVNRYV.

Active-site residues include H100 and D103. Residues E231, E267, H270, D295, D306, D308, and D338 each contribute to the Mg(2+) site.

Belongs to the xylose isomerase family. In terms of assembly, homotetramer. Mg(2+) serves as cofactor.

The protein resides in the cytoplasm. It catalyses the reaction alpha-D-xylose = alpha-D-xylulofuranose. In Brucella ovis (strain ATCC 25840 / 63/290 / NCTC 10512), this protein is Xylose isomerase.